The chain runs to 631 residues: Putative meiotic phospholipase SPO1 (631 aa).

An N-terminal signal peptide occupies residues 1 to 17 (MQKLLFVFSVLLTVVLA). The interval 24-67 (QCPSSPLIREAKHELCPEETLYLKKKKIKTKNKLIQFLKSLTEA) is required for lipid-binding and function in meiosis. Residues 24–631 (QCPSSPLIRE…LQCFKDYCYS (608 aa)) enclose the PLA2c domain. N-linked (GlcNAc...) asparagine glycans are attached at residues Asn-233, Asn-293, and Asn-303. The helical transmembrane segment at 376–396 (FITATSSSIFNNVLIFIWNLA) threads the bilayer. 5 N-linked (GlcNAc...) asparagine glycosylation sites follow: Asn-500, Asn-536, Asn-560, Asn-563, and Asn-572.

Belongs to the lysophospholipase family. Interacts with SPO23. Glycosylated.

Its subcellular location is the endoplasmic reticulum membrane. It is found in the nucleus membrane. Its function is as follows. Regulates spindle pole duplication in meiosis I, but not in mitosis. Required for meiosis I, meiosis II chromosome segregation and spore formation. Binds phosphatidylinositol (4)P mono- and polyphosphates. This chain is Putative meiotic phospholipase SPO1 (SPO1), found in Saccharomyces cerevisiae (strain ATCC 204508 / S288c) (Baker's yeast).